A 114-amino-acid chain; its full sequence is Fumarate reductase subunit D (114 aa).

3 helical membrane passes run 24–44 (VSAI…PFGL), 50–70 (LITF…TIFP), and 92–112 (GGFI…FAVI).

The protein belongs to the FrdD family. Part of an enzyme complex containing four subunits: a flavoprotein (FrdA), an iron-sulfur protein (FrdB), and two hydrophobic anchor proteins (FrdC and FrdD).

It is found in the cell inner membrane. In terms of biological role, anchors the catalytic components of the fumarate reductase complex to the cell membrane, binds quinones. The sequence is that of Fumarate reductase subunit D from Haemophilus influenzae (strain PittGG).